The primary structure comprises 563 residues: Arginine--tRNA ligase (563 aa).

A 'HIGH' region motif is present at residues 121–131 (PNIAKPFSIGH).

The protein belongs to the class-I aminoacyl-tRNA synthetase family. As to quaternary structure, monomer.

Its subcellular location is the cytoplasm. It carries out the reaction tRNA(Arg) + L-arginine + ATP = L-arginyl-tRNA(Arg) + AMP + diphosphate. This is Arginine--tRNA ligase from Streptococcus pyogenes serotype M2 (strain MGAS10270).